Reading from the N-terminus, the 461-residue chain is Tip elongation protein 1 (461 aa).

Residues 22-69 form the CAP-Gly domain; sequence GEVENRKGVYVGLELLPEFAEFGKNRGVVDGREYFKTKNNEKTGIFVP. Ser82, Ser84, Ser289, Ser294, and Ser305 each carry phosphoserine. Residues 134–418 adopt a coiled-coil conformation; the sequence is TEKILQKRIE…RMSPAEFELE (285 aa). The segment covering 278–303 has biased composition (polar residues); the sequence is KANSSTANEKLSHMESSSPTLTNASF. The interval 278–323 is disordered; that stretch reads KANSSTANEKLSHMESSSPTLTNASFESPKRGKGSNDLPENHPQRR. Residue Thr367 is modified to Phosphothreonine. A disordered region spans residues 417–437; it reads LETTQEVEENDSDSHDDEETW.

Monomer. Interacts with tea1 and tea2. Interacts with tea4 in the presence of tea1.

It is found in the cytoplasm. The protein resides in the cytoskeleton. Has a role in stabilizing and targeting the growing tips of the microtubules along the long axis of the cell, directing them to the ends of the cell. Acts as a cargo for tea2. This is Tip elongation protein 1 (tip1) from Schizosaccharomyces pombe (strain 972 / ATCC 24843) (Fission yeast).